The following is a 64-amino-acid chain: Large ribosomal subunit protein bL33c (64 aa).

The protein belongs to the bacterial ribosomal protein bL33 family.

The protein localises to the plastid. It is found in the chloroplast. This chain is Large ribosomal subunit protein bL33c (rpl33), found in Cyanidium caldarium (Red alga).